The following is a 691-amino-acid chain: Elongation factor G (691 aa).

The region spanning 12 to 286 is the tr-type G domain; that stretch reads KKLRNIGIMA…GILEYLPSPL (275 aa). Residues 21–28, 85–89, and 139–142 each bind GTP; these read AHIDAGKT, DTPGH, and NKMD.

It belongs to the TRAFAC class translation factor GTPase superfamily. Classic translation factor GTPase family. EF-G/EF-2 subfamily.

The protein resides in the cytoplasm. Functionally, catalyzes the GTP-dependent ribosomal translocation step during translation elongation. During this step, the ribosome changes from the pre-translocational (PRE) to the post-translocational (POST) state as the newly formed A-site-bound peptidyl-tRNA and P-site-bound deacylated tRNA move to the P and E sites, respectively. Catalyzes the coordinated movement of the two tRNA molecules, the mRNA and conformational changes in the ribosome. This Thermosipho africanus (strain TCF52B) protein is Elongation factor G.